A 623-amino-acid chain; its full sequence is V-type proton ATPase catalytic subunit A (623 aa).

252–259 (GAFGCGKT) is a binding site for ATP.

It belongs to the ATPase alpha/beta chains family. V-ATPase is a heteromultimeric enzyme composed of a peripheral catalytic V1 complex (main components: subunits A, B, C, D, E, and F) attached to an integral membrane V0 proton pore complex (main component: the proteolipid protein).

The catalysed reaction is ATP + H2O + 4 H(+)(in) = ADP + phosphate + 5 H(+)(out). Functionally, catalytic subunit of the peripheral V1 complex of vacuolar ATPase. V-ATPase vacuolar ATPase is responsible for acidifying a variety of intracellular compartments in eukaryotic cells. The protein is V-type proton ATPase catalytic subunit A of Beta vulgaris (Sugar beet).